The primary structure comprises 251 residues: MSEHVYNLVKKHHSVRKFKNKPLSEDVVKKLVEAGQSASTSSFLQAYSIIGIDDEKIKENLREVSGQPYVVENGYLFVFVIDYYRHHLVDQHAETDMENAYGSTEGLLVGAIDAALVAENIAVTAEDMGYGIVFLGSLRNDVERVREILDLPDYVFPVFGMAVGEPADDENGAAKPRLPFDHVFHHNKYHADKETQYAQMADYDQTISEYYDQRTNGNRKETWSQQIEMFLGNKARLDMLEQLQKSGLIQR.

The protein belongs to the flavin oxidoreductase frp family. Requires FMN as cofactor.

Its function is as follows. Reduces FMN, organic nitro compounds and disulfide DTNB. Involved in maintenance of the cellular redox state and the disulfide stress response. This is NADPH-dependent oxidoreductase (nfrA) from Staphylococcus aureus (strain USA300).